The sequence spans 1084 residues: AP-3 complex subunit beta-1 (1084 aa).

The segment covering 1-11 (MSSNSFAYNEQ) has biased composition (polar residues). The segment at 1–26 (MSSNSFAYNEQSGGGEATELGQEATS) is disordered. Phosphoserine is present on residues Ser276 and Ser609. The tract at residues 663-800 (AGKAKKENPD…KEKKTKQERN (138 aa)) is disordered. Positions 666 to 677 (AKKENPDKKFYS) are enriched in basic and acidic residues. Residues 678-717 (ESEEEEDSSESSSDSESESGSESGEDEEDDRSGDSAEDSG) are compositionally biased toward acidic residues. Low complexity predominate over residues 718 to 729 (ESGSEPEAGKGR). Residues 738-753 (GRGDSKDVDKEKENSK) show a composition bias toward basic and acidic residues. Residue Ser742 is modified to Phosphoserine. Over residues 754–767 (TSESSSGESSSIEE) the composition is skewed to low complexity. A compositionally biased stretch (acidic residues) spans 768–781 (SSSDSESESESESE). Positions 782 to 800 (SESRKVTKEKEKKTKQERN) are enriched in basic and acidic residues.

Belongs to the adaptor complexes large subunit family. In terms of assembly, adaptor protein complex 3 (AP-3) is a heterotetramer composed of two large adaptins (delta-type subunit AP3D1 and beta-type subunit AP3B1 or AP3B2), a medium adaptin (mu-type subunit AP3M1 or AP3M2) and a small adaptin (sigma-type subunit APS1 or AP3S2). AP-3 associates with the BLOC-1 complex. Interacts with KIF3A; interaction is direct; interaction is impaired by pyrophosphorylation of AP3B1. Post-translationally, phosphorylated on serine residues. Pyrophosphorylation by 5-diphosphoinositol pentakisphosphate (5-IP7) impairs interaction with KIF3A. Serine pyrophosphorylation is achieved by Mg(2+)-dependent, but enzyme independent transfer of a beta-phosphate from a inositol pyrophosphate to a pre-phosphorylated serine residue.

The protein localises to the cytoplasmic vesicle. The protein resides in the clathrin-coated vesicle membrane. It localises to the golgi apparatus. Subunit of non-clathrin- and clathrin-associated adaptor protein complex 3 (AP-3) that plays a role in protein sorting in the late-Golgi/trans-Golgi network (TGN) and/or endosomes. The AP complexes mediate both the recruitment of clathrin to membranes and the recognition of sorting signals within the cytosolic tails of transmembrane cargo molecules. AP-3 appears to be involved in the sorting of a subset of transmembrane proteins targeted to lysosomes and lysosome-related organelles. In concert with the BLOC-1 complex, AP-3 is required to target cargos into vesicles assembled at cell bodies for delivery into neurites and nerve terminals. The protein is AP-3 complex subunit beta-1 (AP3B1) of Bos taurus (Bovine).